A 364-amino-acid polypeptide reads, in one-letter code: Acidic fibroblast growth factor intracellular-binding protein (364 aa).

Thr-2 carries the N-acetylthreonine modification.

Binds to internalized FGF1; this interaction is increased in the presence of CSNKB, suggesting a possible cooperative interaction between CSNKB and FIBP in binding to FGF1. As to expression, highly expressed in heart, skeletal muscle and pancreas. Expressed at lower levels in brain. Also found in placenta, liver and kidney.

The protein resides in the nucleus. It is found in the endomembrane system. Its function is as follows. May be involved in mitogenic function of FGF1. May mediate with IER2 FGF-signaling in the establishment of laterality in the embryo. This is Acidic fibroblast growth factor intracellular-binding protein (FIBP) from Homo sapiens (Human).